We begin with the raw amino-acid sequence, 1355 residues long: Collagen alpha-2(I) chain (1355 aa).

A signal peptide spans 1–22; it reads MLSFVDLRSVLLLAVTLYLVTC. Glutamine 23 is modified (pyrrolidone carboxylic acid). The propeptide at 23-71 is N-terminal propeptide; that stretch reads QEVRRGPRGDKGPPGEQGPPGIPGRDGEDGLPGLPGPPGVPGLGGNFAA. A compositionally biased stretch (basic and acidic residues) spans 26–35; it reads RRGPRGDKGP. Residues 26 to 1111 are disordered; the sequence is RRGPRGDKGP…GDGGEYYRAD (1086 aa). Glutamine 72 bears the Pyrrolidone carboxylic acid mark. Allysine is present on lysine 77. Low complexity predominate over residues 99-108; it reads PGSQGFQGLP. A compositionally biased stretch (basic and acidic residues) spans 132–146; that stretch reads AGEDGHPGKSGRPGE. Lysine 168 is modified (5-hydroxylysine; alternate). The O-linked (Gal...) hydroxylysine; alternate glycan is linked to lysine 168. Over residues 218 to 267 the composition is skewed to low complexity; it reads PAGSAGSRGSDGSSGPVGPAGPIGSAGAPGLPGAPGAKGELGPAGNNGPT. The segment covering 276-290 has biased composition (pro residues); the sequence is PGPPGSLGPAGPPGN. Residues 291–303 show a composition bias toward low complexity; sequence PGTNGVNGAKGTA. Residues 304-322 are compositionally biased toward gly residues; it reads GLPGVGGAPGLPGGRGIPG. The span at 327-336 shows a compositional bias: low complexity; it reads AGPSGARGLA. 2 stretches are compositionally biased toward gly residues: residues 340–349 and 403–412; these read GIAGGKGDTG and GRAGGIGPAG. Low complexity-rich tracts occupy residues 413-426 and 465-495; these read SRGS…RGPN and EGRS…NGEP. Gly residues-rich tracts occupy residues 523 to 532 and 586 to 595; these read GPAGLGGATG and GESGGAGPHG. Residues 596–618 show a composition bias toward low complexity; sequence PSGSRGPSGAPGPDGQKGEPGAA. Residues 619-628 show a composition bias toward gly residues; it reads GLNGGLGPSG. Composition is skewed to low complexity over residues 659–675, 687–701, and 708–726; these read NPGR…AGAP, SGPA…PRGA, and AGPA…AGHT. Over residues 728–738 the composition is skewed to basic and acidic residues; the sequence is AKGDRGAKGPK. 2 stretches are compositionally biased toward low complexity: residues 741–767 and 776–788; these read AGSP…STGA and ATGF…RAGA. Over residues 804–813 the composition is skewed to basic and acidic residues; the sequence is PGKDGSRGPR. Residues 852–869 show a composition bias toward low complexity; sequence AGPSGVLGARGILGLPGT. Positions 874-883 are enriched in gly residues; that stretch reads GLPGGPGSNG. Composition is skewed to low complexity over residues 884-912 and 947-966; these read EPGP…VGHS and PSGL…AGKS. Over residues 967–976 the composition is skewed to gly residues; the sequence is GNRGEGGPSG. The segment covering 996–1014 has biased composition (basic and acidic residues); that stretch reads RGDKGEAGERGARGLDGRK. A compositionally biased stretch (low complexity) spans 1019 to 1041; sequence LSGLPGPSGTPGETGPSGSVGPV. Residues 1080–1091 are compositionally biased toward pro residues; sequence AGPPGPPGPPGH. The segment covering 1093–1105 has biased composition (gly residues); that stretch reads GPSGGGYDGGDGG. Positions 1111–1355 are cleaved as a propeptide — C-terminal propeptide; sequence DQPERKPKDY…GFEIGPVCFK (245 aa). The 236-residue stretch at 1120–1355 folds into the Fibrillar collagen NC1 domain; that stretch reads YEVDATLKSL…GFEIGPVCFK (236 aa). Intrachain disulfides connect cysteine 1150–cysteine 1182, cysteine 1190–cysteine 1353, and cysteine 1261–cysteine 1306. Ca(2+) is bound by residues aspartate 1168, asparagine 1170, glutamine 1171, cysteine 1173, and aspartate 1176. Residues asparagine 1206 and asparagine 1256 are each glycosylated (N-linked (GlcNAc...) asparagine).

The protein belongs to the fibrillar collagen family. In terms of assembly, trimers of one alpha 2(I) and two alpha 1(I) chains. Prolines at the third position of the tripeptide repeating unit (G-X-Y) are hydroxylated in some or all of the chains. As to expression, forms the fibrils of tendon, ligaments and bones. In bones the fibrils are mineralized with calcium hydroxyapatite.

Its subcellular location is the secreted. It localises to the extracellular space. The protein resides in the extracellular matrix. Type I collagen is a member of group I collagen (fibrillar forming collagen). This chain is Collagen alpha-2(I) chain (COL1A2), found in Aquarana catesbeiana (American bullfrog).